The chain runs to 165 residues: Glutamyl-tRNA(Gln) amidotransferase subunit F, mitochondrial (165 aa).

The transit peptide at 1–19 (MKSILRSTTRNLITSSRRF) directs the protein to the mitochondrion.

This sequence belongs to the GatF family. As to quaternary structure, subunit of the heterotrimeric GatFAB amidotransferase (AdT) complex, composed of A, B and F subunits.

The protein resides in the mitochondrion inner membrane. It carries out the reaction L-glutamyl-tRNA(Gln) + L-glutamine + ATP + H2O = L-glutaminyl-tRNA(Gln) + L-glutamate + ADP + phosphate + H(+). Functionally, allows the formation of correctly charged Gln-tRNA(Gln) through the transamidation of misacylated Glu-tRNA(Gln) in the mitochondria. The reaction takes place in the presence of glutamine and ATP through an activated gamma-phospho-Glu-tRNA(Gln). Required for proper protein synthesis within the mitochondrion. This is Glutamyl-tRNA(Gln) amidotransferase subunit F, mitochondrial from Candida albicans (strain SC5314 / ATCC MYA-2876) (Yeast).